Reading from the N-terminus, the 219-residue chain is Probable glutathione S-transferase GSTF1 (219 aa).

The 82-residue stretch at 2–83 folds into the GST N-terminal domain; the sequence is TPVKVFGPAQ…YILRKYKTRE (82 aa). Residues Ser12, 41–42, 54–55, and 67–68 contribute to the glutathione site; these read HK, QI, and ES. Residues 91–219 form the GST C-terminal domain; sequence NLREAAMVDV…LAAVMAPQGA (129 aa).

Belongs to the GST superfamily. Phi family. In terms of tissue distribution, constitutively expressed in roots.

The enzyme catalyses RX + glutathione = an S-substituted glutathione + a halide anion + H(+). Conjugation of reduced glutathione to a wide number of exogenous and endogenous hydrophobic electrophiles. This chain is Probable glutathione S-transferase GSTF1 (GSTF1), found in Oryza sativa subsp. japonica (Rice).